The chain runs to 142 residues: MKTFSLKLNDIKRNWFYVDATNKILGRFASAISIRLRGKHKIEYTPHLDTGDYIIVLNASKILVTGQKKINKVYYHHTGYIGGIKQLRFEEIMLKNPAKVIEIAVKGMLPKGSLGRSMFKKLKVFSNENHDHIAQCPQFLNI.

Belongs to the universal ribosomal protein uL13 family. In terms of assembly, part of the 50S ribosomal subunit.

This protein is one of the early assembly proteins of the 50S ribosomal subunit, although it is not seen to bind rRNA by itself. It is important during the early stages of 50S assembly. This is Large ribosomal subunit protein uL13 from Buchnera aphidicola subsp. Schizaphis graminum (strain Sg).